A 179-amino-acid polypeptide reads, in one-letter code: MAKLHDYYKSSVVAELTKQFGYTSVMQVPRIEKITLNMGVGDAINDKKLLENAAADMATISGQKPLITKARKSVAGFKIREGYPIGCKVTLRGERMWDFMERLISIALPRVRDFRGVNAKSFDGRGNYSMGVREQIIFPEIDFDKVDRVRGLDITITTSAGTDEEGRALLAAFNFPFRK.

The protein belongs to the universal ribosomal protein uL5 family. Part of the 50S ribosomal subunit; part of the 5S rRNA/L5/L18/L25 subcomplex. Contacts the 5S rRNA and the P site tRNA. Forms a bridge to the 30S subunit in the 70S ribosome.

Functionally, this is one of the proteins that bind and probably mediate the attachment of the 5S RNA into the large ribosomal subunit, where it forms part of the central protuberance. In the 70S ribosome it contacts protein S13 of the 30S subunit (bridge B1b), connecting the 2 subunits; this bridge is implicated in subunit movement. Contacts the P site tRNA; the 5S rRNA and some of its associated proteins might help stabilize positioning of ribosome-bound tRNAs. In Vibrio vulnificus (strain CMCP6), this protein is Large ribosomal subunit protein uL5.